We begin with the raw amino-acid sequence, 317 residues long: Transcription factor EC (317 aa).

The necessary for transcriptional transactivation stretch occupies residues 1–90 (MTFDCRVCDQ…GLTDAPCPSI (90 aa)). Positions 110-163 (QKKDNHNLIERRRRYNINYRIKELGTLIPKSNDPDMRWNKGTILKASVDYIKWL) constitute a bHLH domain. Positions 242–317 (TSPEFYEQAV…SLSSEDGDEL (76 aa)) are necessary for transcriptional transactivation.

It belongs to the MiT/TFE family. Homodimer. Forms heterodimers with MITF. Interacts with MITF. Forms heterodimers with TFE3. As to expression, expressed in osteoclast-like cells (at protein level). Expressed in cells of the mononuclear phagocyte lineage. Expressed in macrophages and in osteoclast-like cells.

The protein localises to the nucleus. In terms of biological role, transcriptional regulator that acts as a repressor or an activator. Acts as a transcriptional transactivator on the proximal promoter region of the tartrate-resistant acid phosphatase (TRAP) E-box containing promoter. Collaborates with MITF in target gene activation. Acts as a transcriptional repressor on minimal promoter containing element F (that includes an E-box sequence). Binds to element F in an E-box sequence-specific manner. Acts as a transcriptional repressor on minimal promoter containing mu E3 enhancer sequence. Binds to mu E3 DNA sequence of the immunoglobulin heavy-chain gene enhancer. Binds DNA in a homo- or heterodimeric form. The protein is Transcription factor EC (Tfec) of Mus musculus (Mouse).